A 186-amino-acid chain; its full sequence is MEHGEISSKAPLVAPVAAGVNRAVAVVDTFLRFIAIIGTIGSAIAMGTTNETLPFFTQFIQFEAKYSDLPSFTFFVAANAVVCTYLVLSIPLSIVHILRPRARYSRLFLVFFDTAMLALLTAGASAAAAIVYLAHKGNVRANWFSICQQFDSFCERISGSLIGSFAAMVLLVVLITLSAFALARRH.

The Cytoplasmic portion of the chain corresponds to 1-23; it reads MEHGEISSKAPLVAPVAAGVNRA. Residues 24–44 traverse the membrane as a helical segment; it reads VAVVDTFLRFIAIIGTIGSAI. Over 45-73 the chain is Extracellular; sequence AMGTTNETLPFFTQFIQFEAKYSDLPSFT. Asn50 carries an N-linked (GlcNAc...) asparagine glycan. Residues 74 to 94 form a helical membrane-spanning segment; that stretch reads FFVAANAVVCTYLVLSIPLSI. Residues 95-106 lie on the Cytoplasmic side of the membrane; the sequence is VHILRPRARYSR. The chain crosses the membrane as a helical span at residues 107–127; that stretch reads LFLVFFDTAMLALLTAGASAA. Residues 128–160 lie on the Extracellular side of the membrane; it reads AAIVYLAHKGNVRANWFSICQQFDSFCERISGS. The helical transmembrane segment at 161–181 threads the bilayer; sequence LIGSFAAMVLLVVLITLSAFA. The Cytoplasmic segment spans residues 182–186; it reads LARRH.

Belongs to the Casparian strip membrane proteins (CASP) family. In terms of assembly, homodimer and heterodimers.

It is found in the cell membrane. Functionally, regulates membrane-cell wall junctions and localized cell wall deposition. Required for establishment of the Casparian strip membrane domain (CSD) and the subsequent formation of Casparian strips, a cell wall modification of the root endodermis that determines an apoplastic barrier between the intraorganismal apoplasm and the extraorganismal apoplasm and prevents lateral diffusion. The protein is Casparian strip membrane protein 5 of Oryza sativa subsp. japonica (Rice).